Reading from the N-terminus, the 335-residue chain is Zinc-type alcohol dehydrogenase-like protein SAV2186 (335 aa).

The protein belongs to the zinc-containing alcohol dehydrogenase family. Quinone oxidoreductase subfamily.

The polypeptide is Zinc-type alcohol dehydrogenase-like protein SAV2186 (Staphylococcus aureus (strain Mu50 / ATCC 700699)).